Here is a 365-residue protein sequence, read N- to C-terminus: Membrane-bound lytic murein transglycosylase C (365 aa).

Residues 1 to 19 (MKKYTKYLPLLLIIPFLAA) form the signal peptide. Cys20 carries N-palmitoyl cysteine lipidation. Residue Cys20 is the site of S-diacylglycerol cysteine attachment.

Belongs to the transglycosylase Slt family.

It is found in the cell outer membrane. It catalyses the reaction Exolytic cleavage of the (1-&gt;4)-beta-glycosidic linkage between N-acetylmuramic acid (MurNAc) and N-acetylglucosamine (GlcNAc) residues in peptidoglycan, from either the reducing or the non-reducing ends of the peptidoglycan chains, with concomitant formation of a 1,6-anhydrobond in the MurNAc residue.. Functionally, murein-degrading enzyme. May play a role in recycling of muropeptides during cell elongation and/or cell division. This is Membrane-bound lytic murein transglycosylase C from Actinobacillus pleuropneumoniae serotype 5b (strain L20).